A 237-amino-acid chain; its full sequence is Probable transcriptional regulatory protein MCAP_0598 (237 aa).

It belongs to the TACO1 family.

It localises to the cytoplasm. The polypeptide is Probable transcriptional regulatory protein MCAP_0598 (Mycoplasma capricolum subsp. capricolum (strain California kid / ATCC 27343 / NCTC 10154)).